We begin with the raw amino-acid sequence, 2104 residues long: Phenolphthiocerol synthesis polyketide synthase type I Pks15/1 (2104 aa).

A Ketosynthase family 3 (KS3) domain is found at 41–464 (TEPVAVVGIG…GTNAHVILEE (424 aa)). Residues Cys211, His346, and His386 each act as for beta-ketoacyl synthase activity in the active site. The tract at residues 571 to 887 (TAVVFPGQGS…GQLFSTGMSV (317 aa)) is acyltransferase. Ser662 functions as the For acyltransferase activity in the catalytic mechanism. The segment at 935–1057 (HALLGAVVER…GMLGVEAASS (123 aa)) is N-terminal hotdog fold. The interval 935–1095 (HALLGAVVER…YAYGPGFQGL (161 aa)) is dehydratase. The PKS/mFAS DH domain maps to 935-1207 (HALLGAVVER…TRAMSAAQLR (273 aa)). Catalysis depends on His967, which acts as the Proton acceptor; for dehydratase activity. Positions 1069–1207 (AESVDISDGY…TRAMSAAQLR (139 aa)) are C-terminal hotdog fold. The Proton donor; for dehydratase activity role is filled by Asp1128. Positions 1400 to 1705 (GTLEDLVIEP…QARHIGKVVL (306 aa)) are enoylreductase. Residues 1530-1547 (VLIHAGTGGVGMAAVQLA) and 1719-1734 (TVLITGATGAVGAVLA) each bind NADP(+). The interval 1718 to 1899 (ATVLITGATG…SVAWGLWEQS (182 aa)) is beta-ketoacyl reductase (KR). The Carrier domain maps to 2004-2079 (DALVGLVCLQ…AIAEYVGRQI (76 aa)). Ser2039 carries the post-translational modification O-(pantetheine 4'-phosphoryl)serine. The interval 2081–2104 (DSQATQAEEEKLPESDGEMVSVTA) is disordered.

This sequence belongs to the thiolase-like superfamily. Beta-ketoacyl-ACP synthases family. The cofactor is pantetheine 4'-phosphate.

The enzyme catalyses a fatty acyl-[ACP] + malonyl-[ACP] + H(+) = a 3-oxoacyl-[ACP] + holo-[ACP] + CO2. It functions in the pathway lipid metabolism; fatty acid biosynthesis. Functionally, catalyzes the elongation by iterative transfer of p-hydroxybenzoyl group from FadD22 (pHBA-S-FAdD22) to form p-hydroxyphenylalkanoate (pHPA) intermediates during phenolphthiocerol (PPOL) biosynthesis. PPOL is an important intermediate in the biosynthesis of phenolic glycolipid (mycosid B). In Mycobacterium marinum (strain ATCC BAA-535 / M), this protein is Phenolphthiocerol synthesis polyketide synthase type I Pks15/1 (pks15/1).